The chain runs to 90 residues: Antitoxin epsilon 2 (90 aa).

Belongs to the epsilon antitoxin family. In terms of assembly, in the presence of the zeta toxin, forms an inactive PezA(2)PezT(2) heterotetramer.

Its function is as follows. Antitoxin component of a type II toxin-antitoxin (TA) system. Neutralizes the toxic effect of zeta toxin. Part of a postsegregational killing (PSK) system involved in the killing of plasmid-free cells. Continuous synthesis of the epsilon antitoxin is required to counteract the zeta toxin. This chain is Antitoxin epsilon 2, found in Enterococcus faecalis (Streptococcus faecalis).